A 458-amino-acid polypeptide reads, in one-letter code: tRNA modification GTPase MnmE (458 aa).

Positions 26, 88, and 127 each coordinate (6S)-5-formyl-5,6,7,8-tetrahydrofolate. The region spanning 224 to 378 is the TrmE-type G domain; the sequence is GLSTAIIGRP…IEDRINQLFF (155 aa). Residue asparagine 234 coordinates K(+). GTP-binding positions include 234 to 239, 253 to 259, and 278 to 281; these read NVGKSS, TDIAGTT, and DTAG. Residue serine 238 participates in Mg(2+) binding. K(+) contacts are provided by threonine 253, isoleucine 255, and threonine 258. Threonine 259 contributes to the Mg(2+) binding site. Residue lysine 458 participates in (6S)-5-formyl-5,6,7,8-tetrahydrofolate binding.

It belongs to the TRAFAC class TrmE-Era-EngA-EngB-Septin-like GTPase superfamily. TrmE GTPase family. Homodimer. Heterotetramer of two MnmE and two MnmG subunits. K(+) serves as cofactor.

The protein localises to the cytoplasm. Its function is as follows. Exhibits a very high intrinsic GTPase hydrolysis rate. Involved in the addition of a carboxymethylaminomethyl (cmnm) group at the wobble position (U34) of certain tRNAs, forming tRNA-cmnm(5)s(2)U34. This Streptococcus pyogenes serotype M3 (strain ATCC BAA-595 / MGAS315) protein is tRNA modification GTPase MnmE.